An 896-amino-acid chain; its full sequence is Desmocollin-3 (896 aa).

An N-terminal signal peptide occupies residues 1-27 (MAAAGPRRSVRGAVCLHLLLTLVIFSR). Positions 28–135 (AGEACKKVIL…RETVLRRAKR (108 aa)) are excised as a propeptide. Cadherin domains follow at residues 136–243 (RWAP…HPVF), 244–355 (TEAI…APTF), 356–471 (RQNA…GPEC), 472–579 (TPAA…EILQ), and 580–690 (EYVV…ILGK). The Extracellular segment spans residues 136-690 (RWAPIPCSMQ…SRSTGVILGK (555 aa)). An N-linked (GlcNAc...) asparagine glycan is attached at N166. Residues N392, N546, and N629 are each glycosylated (N-linked (GlcNAc...) asparagine). Residues 691–711 (WAILAILLGIALLFSVLLTLV) form a helical membrane-spanning segment. The Cytoplasmic segment spans residues 712–896 (CGVFGATKGK…ITLAEACTKR (185 aa)).

As to quaternary structure, may form homodimers. Interacts with DSG1; there is evidence to suggest that the interaction promotes cell-cell adhesion of keratinocytes. Expressed throughout the basal and spinous layer of the epidermis with weak expression in the granular layer (at protein level). Also expressed in the buccal mucosa, esophagus and cervix (at protein level).

It is found in the cell membrane. The protein localises to the cell junction. Its subcellular location is the desmosome. It localises to the cytoplasm. Its function is as follows. A component of desmosome cell-cell junctions which are required for positive regulation of cellular adhesion. Required for cell-cell adhesion in the epidermis, as a result required for the maintenance of the dermal cohesion and the dermal barrier function. Required for cell-cell adhesion of epithelial cell layers surrounding the telogen hair club, as a result plays an important role in telogen hair shaft anchorage. Essential for successful completion of embryo compaction and embryo development. The chain is Desmocollin-3 (DSC3) from Homo sapiens (Human).